Reading from the N-terminus, the 103-residue chain is MSGRGKGGKGLGKGGAKRHRKVLRDNIQGITKPAIRRLARRGGVKRISGLIYEETRGVLKVFLENVIRDAVTYCEHAKRKTVTAMDVVYALKRQGRTLYGFGG.

Gly residues predominate over residues 1–14 (MSGRGKGGKGLGKG). The tract at residues 1 to 20 (MSGRGKGGKGLGKGGAKRHR) is disordered. Ser2 carries the post-translational modification N-acetylserine. Lys6 and Lys13 each carry N6-acetyl-N6-methyllysine; alternate. Position 17 is an N6-acetyllysine (Lys17). Residues 17–21 (KRHRK) mediate DNA binding. Position 21 is an N6-methyllysine (Lys21).

It belongs to the histone H4 family. As to quaternary structure, the nucleosome is a histone octamer containing two molecules each of H2A, H2B, H3 and H4 assembled in one H3-H4 heterotetramer and two H2A-H2B heterodimers. The octamer wraps approximately 147 bp of DNA.

The protein resides in the nucleus. Its subcellular location is the chromosome. Core component of nucleosome. Nucleosomes wrap and compact DNA into chromatin, limiting DNA accessibility to the cellular machineries which require DNA as a template. Histones thereby play a central role in transcription regulation, DNA repair, DNA replication and chromosomal stability. DNA accessibility is regulated via a complex set of post-translational modifications of histones, also called histone code, and nucleosome remodeling. The polypeptide is Histone H4 (Holothuria tubulosa (Tubular sea cucumber)).